We begin with the raw amino-acid sequence, 670 residues long: Histone-lysine N-methyltransferase, H3 lysine-9 specific SUVH1 (670 aa).

Residues 53–140 (YPFSSSQANQ…RPISRPENMN (88 aa)) are disordered. Residues 68-79 (NQAQYPPQHQQP) show a composition bias toward low complexity. The segment covering 123-133 (VKRRIPKKRPI) has biased composition (basic residues). Residues 211 to 357 (GIVPGVEIGD…HNTFKYKLVR (147 aa)) form the YDG domain. Positions 432-492 (FGCDCANLCK…TCKNKVTQMG (61 aa)) constitute a Pre-SET domain. Cys-434, Cys-436, Cys-440, Cys-447, Cys-449, Cys-475, Cys-479, Cys-481, and Cys-484 together coordinate Zn(2+). The SET domain maps to 495 to 639 (VRLEVFKTAN…PMTELTYDYG (145 aa)). S-adenosyl-L-methionine-binding positions include 505–507 (RGW), Asp-541, Tyr-543, Arg-593, and 596–597 (NH). Zn(2+)-binding residues include Cys-599, Cys-658, Cys-660, and Cys-665. Positions 654-670 (GKRKCFCGSAYCRGSFG) constitute a Post-SET domain.

It belongs to the class V-like SAM-binding methyltransferase superfamily. Histone-lysine methyltransferase family. Suvar3-9 subfamily. Expressed in leaves stems and flowers.

Its subcellular location is the nucleus. It localises to the chromosome. It is found in the centromere. It carries out the reaction L-lysyl(9)-[histone H3] + 2 S-adenosyl-L-methionine = N(6),N(6)-dimethyl-L-lysyl(9)-[histone H3] + 2 S-adenosyl-L-homocysteine + 2 H(+). Functionally, histone methyltransferase. Methylates 'Lys-9' of histone H3. H3 'Lys-9' methylation represents a specific tag for epigenetic transcriptional repression. The protein is Histone-lysine N-methyltransferase, H3 lysine-9 specific SUVH1 (SUVH1) of Arabidopsis thaliana (Mouse-ear cress).